Here is a 221-residue protein sequence, read N- to C-terminus: Ethylene-inducing xylanase 4 (221 aa).

Positions 1 to 19 (MVSFSTLLTACTAITGALG) are cleaved as a signal peptide. A GH11 domain is found at 28–218 (NVTPNAQGTH…SAGRASVVVE (191 aa)). N96 is a glycosylation site (N-linked (GlcNAc...) asparagine). Residue E114 is the Nucleophile of the active site. E205 acts as the Proton donor in catalysis.

It belongs to the glycosyl hydrolase 11 (cellulase G) family.

The enzyme catalyses Endohydrolysis of (1-&gt;4)-beta-D-xylosidic linkages in xylans.. It functions in the pathway glycan degradation; xylan degradation. In terms of biological role, endo-1,4-beta-xylanase involved in the hydrolysis of xylan, a major structural heterogeneous polysaccharide found in plant biomass representing the second most abundant polysaccharide in the biosphere, after cellulose. May act as an elicitor of plant defense responses in certain plants but does not exhibit any cell death when transiently expressed in N.benthamiana. This is Ethylene-inducing xylanase 4 from Verticillium dahliae (strain VdLs.17 / ATCC MYA-4575 / FGSC 10137) (Verticillium wilt).